The sequence spans 556 residues: Formate--tetrahydrofolate ligase (556 aa).

65–72 (TPAGEGKS) is an ATP binding site.

Belongs to the formate--tetrahydrofolate ligase family.

It catalyses the reaction (6S)-5,6,7,8-tetrahydrofolate + formate + ATP = (6R)-10-formyltetrahydrofolate + ADP + phosphate. Its pathway is one-carbon metabolism; tetrahydrofolate interconversion. The polypeptide is Formate--tetrahydrofolate ligase (Streptococcus pneumoniae (strain JJA)).